Consider the following 100-residue polypeptide: Putative membrane protein insertion efficiency factor (100 aa).

Residues 73–100 (DPVPDLPGSAPEENGRPSPDGQHSGSGG) form a disordered region.

Belongs to the UPF0161 family.

It localises to the cell inner membrane. In terms of biological role, could be involved in insertion of integral membrane proteins into the membrane. This chain is Putative membrane protein insertion efficiency factor, found in Synechococcus sp. (strain JA-3-3Ab) (Cyanobacteria bacterium Yellowstone A-Prime).